Here is a 138-residue protein sequence, read N- to C-terminus: Basic phospholipase A2 trimucrotoxin (138 aa).

The signal sequence occupies residues 1-16; that stretch reads MRTLWIVAVLLLGVEG. 7 cysteine pairs are disulfide-bonded: Cys42-Cys131, Cys44-Cys60, Cys59-Cys111, Cys65-Cys138, Cys66-Cys104, Cys73-Cys97, and Cys91-Cys102. 3 residues coordinate Ca(2+): Tyr43, Gly45, and Gly47. His63 is an active-site residue. Asp64 provides a ligand contact to Ca(2+). Asp105 is an active-site residue.

Belongs to the phospholipase A2 family. Group II subfamily. D49 sub-subfamily. Homodimer. Ca(2+) is required as a cofactor. As to expression, expressed by the venom gland.

It is found in the secreted. The catalysed reaction is a 1,2-diacyl-sn-glycero-3-phosphocholine + H2O = a 1-acyl-sn-glycero-3-phosphocholine + a fatty acid + H(+). Snake venom phospholipase A2 (PLA2) that displays edema-inducing activities, as well as presynaptic neurotoxicity and low myotoxicity. PLA2 catalyzes the calcium-dependent hydrolysis of the 2-acyl groups in 3-sn-phosphoglycerides. In Protobothrops mucrosquamatus (Taiwan habu), this protein is Basic phospholipase A2 trimucrotoxin.